The primary structure comprises 442 residues: D-galactonate dehydratase family member SSBG_02010 (442 aa).

Mg(2+) is bound at residue Asp-246. Residue His-248 participates in D-arabinonate binding. Residues Glu-272 and Glu-298 each contribute to the Mg(2+) site. Glu-298, Arg-319, His-348, and Glu-375 together coordinate D-arabinonate.

The protein belongs to the mandelate racemase/muconate lactonizing enzyme family. GalD subfamily.

Has no detectable activity with D-mannonate and with a panel of 70 other acid sugars (in vitro), in spite of the conservation of the residues that are expected to be important for catalytic activity and cofactor binding. May have evolved a divergent function. In Streptomyces sp. (strain SPB074), this protein is D-galactonate dehydratase family member SSBG_02010.